Consider the following 231-residue polypeptide: MARGKIQIKRIENQTNRQVTYSKRRNGLFKKANELTVLCDAKVSIIMISSTGKLHEFISPSITTKQLFDLYQKTVGVDLWNSHYEKMQEQLRKLKEVNRNLRKEIRQRMGESLNDLNYEQLEELMENVDNSLKLIRERKYKVIGNQIETFKKKVRNVEEIHRNLLLEFDARQEDPYGLVEQEGDYNSVLGFPNGGHRILALRLQPNHHQPNHHHHLHSGGGSDITTFALLE.

Residues 3–58 (RGKIQIKRIENQTNRQVTYSKRRNGLFKKANELTVLCDAKVSIIMISSTGKLHEFI) enclose the MADS-box domain. One can recognise a K-box domain in the interval 84–174 (YEKMQEQLRK…LLEFDARQED (91 aa)).

Predominantly expressed in petals and stamens, less in carpels and sepals.

It localises to the nucleus. In terms of biological role, transcription factor involved in the genetic control of flower development. Necessary for the normal development of petals. Absence of the PMADS1 protein causes transformation of petals into sepals. The sequence is that of Floral homeotic protein PMADS 1 (PMADS1) from Petunia hybrida (Petunia).